A 98-amino-acid chain; its full sequence is MSAKAEHYDVIRKPIITEKATMTSENGAVVFEVAIDSNKPQIKEAVEALFGVKVKAVNTTITKGKVKRFRGQLGKRKDVKKAYVTLEAGNTIDVSTGL.

It belongs to the universal ribosomal protein uL23 family. In terms of assembly, part of the 50S ribosomal subunit. Contacts protein L29, and trigger factor when it is bound to the ribosome.

Functionally, one of the early assembly proteins it binds 23S rRNA. One of the proteins that surrounds the polypeptide exit tunnel on the outside of the ribosome. Forms the main docking site for trigger factor binding to the ribosome. This is Large ribosomal subunit protein uL23 from Roseobacter denitrificans (strain ATCC 33942 / OCh 114) (Erythrobacter sp. (strain OCh 114)).